The following is a 66-amino-acid chain: Large ribosomal subunit protein uL29 (66 aa).

It belongs to the universal ribosomal protein uL29 family.

The polypeptide is Large ribosomal subunit protein uL29 (Deinococcus deserti (strain DSM 17065 / CIP 109153 / LMG 22923 / VCD115)).